The following is a 330-amino-acid chain: Formylaminopyrimidine-binding protein (330 aa).

An N-terminal signal peptide occupies residues 1–18; the sequence is MKSFKIISLLLAILFLAS. Cysteine 19 carries N-palmitoyl cysteine lipidation. Cysteine 19 carries S-diacylglycerol cysteine lipidation. Substrate is bound by residues 38–39, tyrosine 90, asparagine 145, tyrosine 188, and glutamate 192; that span reads DW.

It belongs to the NMT1 family. As to quaternary structure, the complex is likely composed of an ATP-binding protein (ThiZ), a transmembrane protein (ThiX) and a solute-binding protein (ThiY).

The protein resides in the cell membrane. The protein operates within cofactor biosynthesis; thiamine diphosphate biosynthesis. In terms of biological role, participates in a thiamine pyrimidine salvage pathway as part of the ABC transporter complex ThiXYZ involved in the import of thiamine degradation products. Binds the formylaminopyrimidine N-formyl-4-amino-5-aminomethyl-2-methylpyrimidine (FAMP). Does not bind thiamine. This Halalkalibacterium halodurans (strain ATCC BAA-125 / DSM 18197 / FERM 7344 / JCM 9153 / C-125) (Bacillus halodurans) protein is Formylaminopyrimidine-binding protein.